The chain runs to 220 residues: Thiopurine S-methyltransferase (220 aa).

W10, L45, E66, and R123 together coordinate S-adenosyl-L-methionine.

The protein belongs to the class I-like SAM-binding methyltransferase superfamily. TPMT family.

The protein resides in the cytoplasm. It catalyses the reaction S-adenosyl-L-methionine + a thiopurine = S-adenosyl-L-homocysteine + a thiopurine S-methylether.. The polypeptide is Thiopurine S-methyltransferase (Pseudomonas syringae pv. tomato (strain ATCC BAA-871 / DC3000)).